The sequence spans 432 residues: MANVVVVGSQWGDEGKGKIVDWLSERADVVVRYQGGHNAGHTLVIDGVSYKLSLLPSGVVRSGKLSLIGNGVVFDPHAFVAEIERLKGQGISVTPESLKVAENTALILSLHRELDAFREDAASNSGTKIGTTRRGIGPAYEDKVGRRAIRVMDLADPETLSLKVDRLLTHHNALRRGLGHAEVSHEAIMQELTSVADKILPFVDRVWKILEDARRAGSRILFEGAQGTMLDIDHGTYPFVTSSNTVAGQAATGSGLGPGAVGYVLGITKAYTTRVGEGPFPTEQDNEIGEFLGNRGHEFGTVTGRKRRCGWFDAVQVRQSVVTNGMSGIALTKLDVLDGMEEIKVCTGYRLDGQVIDYLPASQGAQARLDPIYETLEGWKETTRGARKWNDLPAQAVKYVRHIEELIGAPVAILSTSPEREDAILVKDPFQD.

GTP contacts are provided by residues 12 to 18 and 40 to 42; these read GDEGKGK and GHT. D13 functions as the Proton acceptor in the catalytic mechanism. Mg(2+)-binding residues include D13 and G40. IMP contacts are provided by residues 13 to 16, 38 to 41, T132, R146, Q226, T241, and R305; these read DEGK and NAGH. Catalysis depends on H41, which acts as the Proton donor. 301 to 307 serves as a coordination point for substrate; the sequence is TVTGRKR. Residues R307, 333 to 335, and 415 to 417 contribute to the GTP site; these read KLD and STS.

It belongs to the adenylosuccinate synthetase family. In terms of assembly, homodimer. The cofactor is Mg(2+).

The protein localises to the cytoplasm. It carries out the reaction IMP + L-aspartate + GTP = N(6)-(1,2-dicarboxyethyl)-AMP + GDP + phosphate + 2 H(+). It functions in the pathway purine metabolism; AMP biosynthesis via de novo pathway; AMP from IMP: step 1/2. Plays an important role in the de novo pathway of purine nucleotide biosynthesis. Catalyzes the first committed step in the biosynthesis of AMP from IMP. The sequence is that of Adenylosuccinate synthetase from Chelativorans sp. (strain BNC1).